We begin with the raw amino-acid sequence, 148 residues long: MGRAGPRSTADTRPRATVITTRRPRPWQKPTSPRRLHRRRPRGQPASENAAEPSQVAISKGKSPDYANGGKAAMDSRASDAINKSKVDTSASNPSQRRPSRLRGKRSLALPPRLECLFPSSCGSRRATSRPGFPPLEGSHLGCQLLPL.

Residues 1 to 108 are disordered; the sequence is MGRAGPRSTA…PSRLRGKRSL (108 aa). Residues 22–42 show a composition bias toward basic residues; sequence RRPRPWQKPTSPRRLHRRRPR. Residues 88-97 show a composition bias toward polar residues; that stretch reads DTSASNPSQR.

This is an uncharacterized protein from Homo sapiens (Human).